The following is a 101-amino-acid chain: Guanyl-specific ribonuclease Po1 (101 aa).

A Pyrrolidone carboxylic acid modification is found at Gln-1. 3 disulfide bridges follow: Cys-7-Cys-84, Cys-9-Cys-99, and Cys-48-Cys-82. His-36 is a catalytic residue. Glu-54 serves as the catalytic Proton acceptor. The Proton donor role is filled by His-87.

Belongs to the ribonuclease N1/T1 family.

It catalyses the reaction [RNA] containing guanosine + H2O = an [RNA fragment]-3'-guanosine-3'-phosphate + a 5'-hydroxy-ribonucleotide-3'-[RNA fragment].. With respect to regulation, inhibited by divalent cations. Inhibition decreases in the order zinc, lead, cadmium, nickel, mercury. The polypeptide is Guanyl-specific ribonuclease Po1 (Pleurotus ostreatus (Oyster mushroom)).